Reading from the N-terminus, the 216-residue chain is Somatotropin (216 aa).

Residues 1–26 (MAAGPRTSVLLAFALLCLPWTQEVGA) form the signal peptide. His-45 provides a ligand contact to Zn(2+). Cys-78 and Cys-189 are oxidised to a cystine. Residue Ser-131 is modified to Phosphoserine. Position 198 (Glu-198) interacts with Zn(2+). Residues Cys-206 and Cys-214 are joined by a disulfide bond.

This sequence belongs to the somatotropin/prolactin family.

It localises to the secreted. In terms of biological role, plays an important role in growth control. Its major role in stimulating body growth is to stimulate the liver and other tissues to secrete IGF1. It stimulates both the differentiation and proliferation of myoblasts. It also stimulates amino acid uptake and protein synthesis in muscle and other tissues. This is Somatotropin (GH1) from Hippopotamus amphibius (Hippopotamus).